The primary structure comprises 1367 residues: Collagen alpha-1(XV) chain (1367 aa).

The signal sequence occupies residues Met1–Ala31. Residues Ser54–Phe249 enclose the Laminin G-like domain. Positions Arg229–Arg604 are nonhelical region 1 (NC1). Ser243 and Ser247 each carry an O-linked (Xyl...) (chondroitin sulfate) serine glycan. Positions Ala267 to Gly319 are disordered. N-linked (GlcNAc...) asparagine glycosylation is found at Asn305 and Asn323. Ser341 carries O-linked (Xyl...) (chondroitin sulfate) serine glycosylation. N-linked (GlcNAc...) asparagine glycosylation is found at Asn348, Asn375, and Asn402. Disordered stretches follow at residues Asp396–Glu446 and Thr529–Glu784. Over residues Asn402–Gly429 the composition is skewed to polar residues. Positions Lys434–Glu446 are enriched in basic and acidic residues. The span at Pro555–Thr564 shows a compositional bias: pro residues. Positions Gly582–Asp595 are enriched in gly residues. 2 Collagen-like domains span residues Gly605–Gly665 and Glu666–Pro717. Positions Gly605 to Gly718 are triple-helical region 1 (COL1). Residues Pro606–Pro616 are compositionally biased toward pro residues. N-linked (GlcNAc...) asparagine glycosylation is present at Asn673. The span at Met703–Pro717 shows a compositional bias: pro residues. The segment at Cys719 to Ser748 is nonhelical region 2 (NC2). Ser730 carries O-linked (Xyl...) (chondroitin sulfate) serine glycosylation. The span at Ser737–Pro750 shows a compositional bias: low complexity. Positions Gly749–Val783 are triple-helical region 2 (COL2). The segment covering Lys751–Ala765 has biased composition (basic and acidic residues). The nonhelical region 3 (NC3) stretch occupies residues Glu784–Met807. Residues Asn792, Asn795, and Asn799 are each glycosylated (N-linked (GlcNAc...) asparagine). Collagen-like domains are found at residues Gly808–Gly850 and Lys863–Gly912. The triple-helical region 3 (COL3) stretch occupies residues Gly808–Ile852. Positions Leu853–Lys863 are nonhelical region 4 (NC4). Residues Gly864–Val934 are triple-helical region 4 (COL4). Positions Lys905–Pro930 are disordered. Over residues Pro916–Pro930 the composition is skewed to pro residues. The interval Val935 to His968 is nonhelical region 5 (NC5). The tract at residues Gly969 to Pro998 is triple-helical region 5 (COL5). 2 disordered regions span residues Lys974–Asp1000 and Gly1055–Leu1089. The nonhelical region 6 (NC6) stretch occupies residues Val999–Ser1031. Residues Gly1032–Pro1086 are triple-helical region 6 (COL6). Residues Gly1055–Pro1086 are compositionally biased toward pro residues. The tract at residues Ala1087–Pro1096 is nonhelical region 7 (NC7). The tract at residues Gly1097–Arg1111 is triple-helical region 7 (COL7). A nonhelical region 8 (NC8) region spans residues Asn1112–Lys1367. Disulfide bonds link Cys1216–Cys1356 and Cys1318–Cys1348.

Belongs to the multiplexin collagen family. In terms of assembly, trimer; disulfide-linked. Interacts moderately with EFEMP2. In terms of processing, prolines at the third position of the tripeptide repeating unit (G-X-Y) are hydroxylated in some or all of the chains. O-glycosylated; contains chondroitin sulfate. Detected in testis, brain, heart, kidney, skeletal muscle and skin (at protein level). Detected in heart and skeletal muscle.

Its subcellular location is the secreted. It is found in the extracellular space. The protein resides in the extracellular matrix. In terms of biological role, structural protein that stabilizes microvessels and muscle cells, both in heart and in skeletal muscle. Functionally, restin potently inhibits angiogenesis. This Mus musculus (Mouse) protein is Collagen alpha-1(XV) chain (Col15a1).